A 988-amino-acid polypeptide reads, in one-letter code: Isoleucine--tRNA ligase (988 aa).

The 'HIGH' region motif lies at 60 to 70; sequence PYANGALHMGH. E570 is an L-isoleucyl-5'-AMP binding site. The 'KMSKS' region signature appears at 611–615; the sequence is KMSKS. ATP is bound at residue K614. 4 residues coordinate Zn(2+): C957, C960, C977, and C980.

This sequence belongs to the class-I aminoacyl-tRNA synthetase family. IleS type 1 subfamily. Monomer. The cofactor is Zn(2+).

It localises to the cytoplasm. It catalyses the reaction tRNA(Ile) + L-isoleucine + ATP = L-isoleucyl-tRNA(Ile) + AMP + diphosphate. Functionally, catalyzes the attachment of isoleucine to tRNA(Ile). As IleRS can inadvertently accommodate and process structurally similar amino acids such as valine, to avoid such errors it has two additional distinct tRNA(Ile)-dependent editing activities. One activity is designated as 'pretransfer' editing and involves the hydrolysis of activated Val-AMP. The other activity is designated 'posttransfer' editing and involves deacylation of mischarged Val-tRNA(Ile). The chain is Isoleucine--tRNA ligase from Synechocystis sp. (strain ATCC 27184 / PCC 6803 / Kazusa).